The chain runs to 26 residues: Delta-conotoxin Am2766 (26 aa).

Cystine bridges form between Cys1-Cys16, Cys8-Cys20, and Cys15-Cys24. Glutamic acid 1-amide is present on Glu26.

As to expression, expressed by the venom duct.

Its subcellular location is the secreted. Its function is as follows. Delta-conotoxins bind to site 6 of voltage-gated sodium channels (Nav) and inhibit the inactivation process. The chain is Delta-conotoxin Am2766 from Conus amadis (Amadis cone).